The chain runs to 812 residues: Probable inorganic carbon transporter subunit DabA (812 aa).

Zn(2+) is bound by residues C338, D340, H498, and C513.

This sequence belongs to the inorganic carbon transporter (TC 9.A.2) DabA family. Forms a complex with DabB. The cofactor is Zn(2+).

The protein resides in the cell inner membrane. In terms of biological role, part of an energy-coupled inorganic carbon pump. The polypeptide is Probable inorganic carbon transporter subunit DabA (Methylobacterium sp. (strain 4-46)).